The chain runs to 312 residues: 2-phosphoglycerate kinase (312 aa).

In terms of domain architecture, ATP-cone spans 8–95 (SRILVTDKEY…LWRRVLKKHS (88 aa)).

It belongs to the 2-phosphoglycerate kinase family. A divalent metal cation is required as a cofactor.

It carries out the reaction (2R)-2-phosphoglycerate + ATP = (2R)-2,3-bisphosphoglycerate + ADP + H(+). It participates in thermoadapter biosynthesis; cyclic 2,3-diphosphoglycerate biosynthesis; cyclic 2,3-diphosphoglycerate from 2-phospho-D-glycerate: step 1/2. In terms of biological role, catalyzes the phosphorylation of 2-phosphoglycerate to 2,3-diphosphoglycerate. Involved in the biosynthesis of cyclic 2,3-bisphosphoglycerate, a thermoprotectant. The sequence is that of 2-phosphoglycerate kinase from Methanococcus maripaludis (strain C7 / ATCC BAA-1331).